Reading from the N-terminus, the 545-residue chain is Ubiquitin carboxyl-terminal hydrolase 17-like protein C (545 aa).

Residues 51-348 enclose the USP domain; that stretch reads CGLQNTGNSC…NAYVLFYVQQ (298 aa). Cysteine 60 (nucleophile) is an active-site residue. Residue histidine 307 is the Proton acceptor of the active site. 2 disordered regions span residues 368–442 and 489–539; these read DPEY…QKLG and WGRD…KQGQ. The span at 374-385 shows a compositional bias: basic residues; that stretch reads KKSRRKKHKKKS. 2 stretches are compositionally biased toward basic and acidic residues: residues 393–404 and 489–505; these read EPCKNREKRATK and WGRD…HNAD. Residues 508–519 are compositionally biased toward polar residues; the sequence is LTSQDPVNTGQL. Residues 524–537 are compositionally biased toward basic residues; it reads GRRRSKKGKNKNKQ.

This sequence belongs to the peptidase C19 family. USP17 subfamily. Expressed in T cells.

It is found in the nucleus. Its subcellular location is the endoplasmic reticulum. It carries out the reaction Thiol-dependent hydrolysis of ester, thioester, amide, peptide and isopeptide bonds formed by the C-terminal Gly of ubiquitin (a 76-residue protein attached to proteins as an intracellular targeting signal).. Deubiquitinating enzyme that removes conjugated ubiquitin from specific proteins to regulate different cellular processes. Important for preimplantation stage embryonic development. This chain is Ubiquitin carboxyl-terminal hydrolase 17-like protein C, found in Mus musculus (Mouse).